The primary structure comprises 27 residues: Chitinase 47 kDa (27 aa).

Residues 3–27 enclose the GH18 domain; it reads SKVVGYFTEWGTYDRKYYVKNIEXS.

The protein belongs to the glycosyl hydrolase 18 family. Chitinase class II subfamily. As to quaternary structure, homodimer.

It catalyses the reaction Random endo-hydrolysis of N-acetyl-beta-D-glucosaminide (1-&gt;4)-beta-linkages in chitin and chitodextrins.. In terms of biological role, able to cleave chitin oligomers from N=3 to 6. The polypeptide is Chitinase 47 kDa (Streptomyces olivaceoviridis (Streptomyces corchorusii)).